We begin with the raw amino-acid sequence, 310 residues long: Glutaminase (310 aa).

Ser-67, Asn-118, Glu-161, Asn-168, Tyr-192, Tyr-244, and Val-262 together coordinate substrate.

This sequence belongs to the glutaminase family. Homotetramer.

It carries out the reaction L-glutamine + H2O = L-glutamate + NH4(+). The sequence is that of Glutaminase from Legionella pneumophila (strain Lens).